The following is a 272-amino-acid chain: Phosphatidylglycerol--prolipoprotein diacylglyceryl transferase (272 aa).

7 helical membrane-spanning segments follow: residues 17–37 (LQVH…WGLA), 55–75 (LVFY…VLFY), 90–110 (VWTG…AMLF), 125–145 (FVAP…FIGG), 174–194 (PSQI…LWWF), 202–222 (MAVS…MEFF), and 230–250 (GFIL…MLLI). R138 lines the a 1,2-diacyl-sn-glycero-3-phospho-(1'-sn-glycerol) pocket.

It belongs to the Lgt family.

It localises to the cell inner membrane. It catalyses the reaction L-cysteinyl-[prolipoprotein] + a 1,2-diacyl-sn-glycero-3-phospho-(1'-sn-glycerol) = an S-1,2-diacyl-sn-glyceryl-L-cysteinyl-[prolipoprotein] + sn-glycerol 1-phosphate + H(+). Its pathway is protein modification; lipoprotein biosynthesis (diacylglyceryl transfer). Functionally, catalyzes the transfer of the diacylglyceryl group from phosphatidylglycerol to the sulfhydryl group of the N-terminal cysteine of a prolipoprotein, the first step in the formation of mature lipoproteins. This chain is Phosphatidylglycerol--prolipoprotein diacylglyceryl transferase, found in Acinetobacter baumannii (strain AB307-0294).